Here is an 887-residue protein sequence, read N- to C-terminus: Integrator complex subunit 6 (887 aa).

One can recognise a VWFA domain in the interval 3-227; it reads ILLFLIDTSA…QCLESLVQKV (225 aa). An Inhibitory loop motif is present at residues 626–633; it reads MMIDEADE. A Phosphoserine modification is found at S804.

The protein belongs to the Integrator subunit 6 family. In terms of assembly, component of the Integrator complex, composed of core subunits INTS1, INTS2, INTS3, INTS4, INTS5, INTS6, INTS7, INTS8, INTS9/RC74, INTS10, INTS11/CPSF3L, INTS12, INTS13, INTS14 and INTS15. The core complex associates with protein phosphatase 2A subunits PPP2CA and PPP2R1A, to form the Integrator-PP2A (INTAC) complex. As to expression, widely expressed. Expressed in heart, brain, placenta, lung, liver, skeletal muscle, kidney and pancreas.

The protein resides in the nucleus. It localises to the chromosome. Its function is as follows. Component of the integrator complex, a multiprotein complex that terminates RNA polymerase II (Pol II) transcription in the promoter-proximal region of genes. The integrator complex provides a quality checkpoint during transcription elongation by driving premature transcription termination of transcripts that are unfavorably configured for transcriptional elongation: the complex terminates transcription by (1) catalyzing dephosphorylation of the C-terminal domain (CTD) of Pol II subunit POLR2A and SUPT5H/SPT5, (2) degrading the exiting nascent RNA transcript via endonuclease activity and (3) promoting the release of Pol II from bound DNA. The integrator complex is also involved in terminating the synthesis of non-coding Pol II transcripts, such as enhancer RNAs (eRNAs), small nuclear RNAs (snRNAs), telomerase RNAs and long non-coding RNAs (lncRNAs). Within the integrator complex, INTS6 acts as a molecular adapter that promotes assembly of protein phosphatase 2A (PP2A) subunits to the integrator core complex, promoting recruitment of PP2A to transcription pause-release checkpoint. Mediates recruitment of cytoplasmic dynein to the nuclear envelope, probably as component of the integrator complex. May have a tumor suppressor role; an ectopic expression suppressing tumor cell growth. The sequence is that of Integrator complex subunit 6 from Homo sapiens (Human).